The sequence spans 410 residues: Arginine deiminase (410 aa).

Cys-400 functions as the Amidino-cysteine intermediate in the catalytic mechanism.

The protein belongs to the arginine deiminase family.

The protein localises to the cytoplasm. The enzyme catalyses L-arginine + H2O = L-citrulline + NH4(+). The protein operates within amino-acid degradation; L-arginine degradation via ADI pathway; carbamoyl phosphate from L-arginine: step 1/2. In Bacillus cytotoxicus (strain DSM 22905 / CIP 110041 / 391-98 / NVH 391-98), this protein is Arginine deiminase.